The chain runs to 392 residues: DNA-directed RNA polymerase subunit Rpo1C (392 aa).

Belongs to the RNA polymerase beta' chain family. In terms of assembly, part of the RNA polymerase complex.

It localises to the cytoplasm. It catalyses the reaction RNA(n) + a ribonucleoside 5'-triphosphate = RNA(n+1) + diphosphate. In terms of biological role, DNA-dependent RNA polymerase (RNAP) catalyzes the transcription of DNA into RNA using the four ribonucleoside triphosphates as substrates. Forms part of the jaw domain. In Saccharolobus islandicus (strain Y.N.15.51 / Yellowstone #2) (Sulfolobus islandicus), this protein is DNA-directed RNA polymerase subunit Rpo1C.